The chain runs to 377 residues: Chorismate synthase (377 aa).

An NADP(+)-binding site is contributed by Arg47. Residues 124–126 (RSS), 252–253 (NS), Gly296, 311–315 (KPTPS), and Arg338 contribute to the FMN site.

Belongs to the chorismate synthase family. Requires FMNH2 as cofactor.

The catalysed reaction is 5-O-(1-carboxyvinyl)-3-phosphoshikimate = chorismate + phosphate. It functions in the pathway metabolic intermediate biosynthesis; chorismate biosynthesis; chorismate from D-erythrose 4-phosphate and phosphoenolpyruvate: step 7/7. Its function is as follows. Catalyzes the anti-1,4-elimination of the C-3 phosphate and the C-6 proR hydrogen from 5-enolpyruvylshikimate-3-phosphate (EPSP) to yield chorismate, which is the branch point compound that serves as the starting substrate for the three terminal pathways of aromatic amino acid biosynthesis. This reaction introduces a second double bond into the aromatic ring system. The sequence is that of Chorismate synthase from Methanococcus vannielii (strain ATCC 35089 / DSM 1224 / JCM 13029 / OCM 148 / SB).